A 210-amino-acid chain; its full sequence is Uracil phosphoribosyltransferase (210 aa).

Residues Arg-78, Arg-103, and 130-138 (DPMLATGGS) each bind 5-phospho-alpha-D-ribose 1-diphosphate. Uracil is bound by residues Ile-193 and 198-200 (GDA). Asp-199 contributes to the 5-phospho-alpha-D-ribose 1-diphosphate binding site.

Belongs to the UPRTase family. Requires Mg(2+) as cofactor.

It carries out the reaction UMP + diphosphate = 5-phospho-alpha-D-ribose 1-diphosphate + uracil. It functions in the pathway pyrimidine metabolism; UMP biosynthesis via salvage pathway; UMP from uracil: step 1/1. With respect to regulation, allosterically activated by GTP. Catalyzes the conversion of uracil and 5-phospho-alpha-D-ribose 1-diphosphate (PRPP) to UMP and diphosphate. This chain is Uracil phosphoribosyltransferase, found in Chromobacterium violaceum (strain ATCC 12472 / DSM 30191 / JCM 1249 / CCUG 213 / NBRC 12614 / NCIMB 9131 / NCTC 9757 / MK).